Here is a 537-residue protein sequence, read N- to C-terminus: CTP synthase (537 aa).

Positions 1 to 268 are amidoligase domain; the sequence is MSFKCIFLTG…STFITEKLGL (268 aa). CTP is bound at residue S14. S14 is a binding site for UTP. 15–20 is an ATP binding site; the sequence is SLGKGL. An L-glutamine-binding site is contributed by Y55. D72 lines the ATP pocket. The Mg(2+) site is built by D72 and E142. CTP-binding positions include 149-151, 188-193, and K224; these read DIE and KTKPTQ. Residues 188–193 and K224 each bind UTP; that span reads KTKPTQ. A Glutamine amidotransferase type-1 domain is found at 294-533; that stretch reads RLGLVGKYVQ…IEAALLHSRN (240 aa). Residue G353 participates in L-glutamine binding. The active-site Nucleophile; for glutamine hydrolysis is the C380. Residues 381-384, E404, and R461 each bind L-glutamine; that span reads LGMQ. Catalysis depends on residues H506 and E508.

It belongs to the CTP synthase family. Homotetramer.

The enzyme catalyses UTP + L-glutamine + ATP + H2O = CTP + L-glutamate + ADP + phosphate + 2 H(+). The catalysed reaction is L-glutamine + H2O = L-glutamate + NH4(+). It catalyses the reaction UTP + NH4(+) + ATP = CTP + ADP + phosphate + 2 H(+). It participates in pyrimidine metabolism; CTP biosynthesis via de novo pathway; CTP from UDP: step 2/2. Its activity is regulated as follows. Allosterically activated by GTP, when glutamine is the substrate; GTP has no effect on the reaction when ammonia is the substrate. The allosteric effector GTP functions by stabilizing the protein conformation that binds the tetrahedral intermediate(s) formed during glutamine hydrolysis. Inhibited by the product CTP, via allosteric rather than competitive inhibition. Its function is as follows. Catalyzes the ATP-dependent amination of UTP to CTP with either L-glutamine or ammonia as the source of nitrogen. Regulates intracellular CTP levels through interactions with the four ribonucleotide triphosphates. The protein is CTP synthase of Chlamydia abortus (strain DSM 27085 / S26/3) (Chlamydophila abortus).